Consider the following 219-residue polypeptide: Lipoprotein-releasing system ATP-binding protein LolD (219 aa).

One can recognise an ABC transporter domain in the interval 3–219 (IEARNIRKSF…HMRDGLLFSE (217 aa)). Residue 35-42 (GTSGAGKT) participates in ATP binding.

This sequence belongs to the ABC transporter superfamily. Lipoprotein translocase (TC 3.A.1.125) family. In terms of assembly, the complex is composed of two ATP-binding proteins (LolD) and two transmembrane proteins (LolC and LolE).

Its subcellular location is the cell inner membrane. Part of the ABC transporter complex LolCDE involved in the translocation of mature outer membrane-directed lipoproteins, from the inner membrane to the periplasmic chaperone, LolA. Responsible for the formation of the LolA-lipoprotein complex in an ATP-dependent manner. In Porphyromonas gingivalis (strain ATCC BAA-308 / W83), this protein is Lipoprotein-releasing system ATP-binding protein LolD.